The primary structure comprises 111 residues: Carboxysome shell protein CcmK1 (111 aa).

In terms of domain architecture, BMC spans 4-90 (AVGMIETLGF…PHENLEYVLP (87 aa)).

The protein belongs to the bacterial microcompartments protein family. CcmK subfamily. As to quaternary structure, homohexamer. Interacts with full-length CcmM. Forms mixed heterohexamers of all possible stoichiometries with CcmK2, which might form dodecamers. Only very weak interactions with CcmK3 and CcmK4 were seen. Interacts with CcmN and CcmO in the carboxysome.

It localises to the carboxysome. One of the shell proteins of the carboxysome, a polyhedral inclusion where RuBisCO (ribulose bisphosphate carboxylase, rbcL-rbcS) is sequestered. Assembles into hexamers which make sheets that form the facets of the polyhedral carboxysome. The hexamer central pore probably regulates metabolite flux. Its function is as follows. Probably the major shell protein of the carboxysome, a polyhedral inclusion where RuBisCO (ribulose bisphosphate carboxylase, rbcL-rbcS) is sequestered. The central pore probably regulates metabolite flux. Hexamers make sheets that form the facets of the carboxysome. The sequence is that of Carboxysome shell protein CcmK1 from Synechocystis sp. (strain ATCC 27184 / PCC 6803 / Kazusa).